The primary structure comprises 2370 residues: Genome polyprotein (2370 aa).

A lipid anchor (N-myristoyl glycine; by host) is attached at Gly112. 2 disordered regions span residues 140–173 and 704–736; these read VGDMPTASSSEAPLGSNKGGSSTSPKSTSNGNVV and GADGAEVQPAPTSDLSDGNPTTDPAPRDNFDYP. The segment covering 154-171 has biased composition (low complexity); the sequence is GSNKGGSSTSPKSTSNGN. Polar residues predominate over residues 713-725; sequence APTSDLSDGNPTT. Residues 1358–1522 enclose the SF3 helicase domain; sequence YSTALSAISL…AAFSAAAALK (165 aa). 1384–1391 is an ATP binding site; the sequence is GPPGTGKS. Gly1597 is lipidated: N-myristoyl glycine; by host. A helical membrane pass occupies residues 1646–1666; that stretch reads IFAASSFLSLIAATLTIVRCL. A disordered region spans residues 1674–1696; that stretch reads GAYSGTPVPKPRKKDLPKQPVYS. O-(5'-phospho-RNA)-tyrosine is present on Tyr1676. The region spanning 1697-1886 is the Peptidase C3 domain; sequence GPVRRQGFDP…FSARLTPERV (190 aa). Active-site for protease 3C activity residues include His1745, Glu1776, and Cys1849. Residues 2007-2016 show a composition bias toward polar residues; the sequence is SPGYPWTTQG. A disordered region spans residues 2007-2026; sequence SPGYPWTTQGRSRRSLFDED. The region spanning 2122-2239 is the RdRp catalytic domain; the sequence is SNVWSIDYSC…GSNQDFHPRE (118 aa). Active-site for RdRp activity residues include Asp2128 and Asp2225.

Interacts with capsid protein VP1. Interacts with capsid protein VP3. In terms of assembly, interacts with capsid protein VP0. Interacts with capsid protein VP3. As to quaternary structure, interacts with capsid protein VP0. Interacts with capsid protein VP1. Homodimer. Interacts with protein 2B. Interacts with protein 2C. In terms of assembly, homodimer. Interacts with host ABCD3. Interacts with protein 2A. Interacts with host ACBD3. As to quaternary structure, homodimer. Interacts with host ABCD3. Interacts with protein 2A. Interacts with protein 3A. Interacts with protein 3C. Interacts with host ACBD3. Homodimer. Interacts with host ABCD3 (via GOLD domain) and PI4KB; these interactions allow the formation of a viral protein/ACBD3/PI4KB complex in order to synthesize PI4P at the viral RNA replication sites. Interacts with protein 2C. Interacts with protein 3C. Protein 3C: Interacts with protein 2A. Protein 3C: Interacts with protein 2C. Specific enzymatic cleavages by the viral protease in vivo yield a variety of precursors and mature proteins. The leader protein-VP0 junction is cleaved by 3C proteinase. The VP1/2A junction is cleaved by the protein 3CD in association with protein 2A. Post-translationally, uridylylated by the polymerase and is covalently linked to the 5'-end of genomic RNA. This uridylylated form acts as a nucleotide-peptide primer for the polymerase.

The protein localises to the virion. Its subcellular location is the host cytoplasm. It is found in the host cytoplasmic vesicle membrane. The protein resides in the host Golgi apparatus membrane. The enzyme catalyses RNA(n) + a ribonucleoside 5'-triphosphate = RNA(n+1) + diphosphate. It catalyses the reaction Selective cleavage of Gln-|-Gly bond in the poliovirus polyprotein. In other picornavirus reactions Glu may be substituted for Gln, and Ser or Thr for Gly.. The catalysed reaction is ATP + H2O = ADP + phosphate + H(+). Required for viral RNA replication and viral RNA encapsidation. Does not have any proteolytic activity. Functionally, forms an icosahedral capsid of pseudo T=3 symmetry with capsid proteins VP0 and VP3. Together they form an icosahedral capsid composed of 60 copies of each VP0, VP1, and VP3. All the three latter proteins contain a beta-sheet structure called beta-barrel jelly roll. Its function is as follows. Forms an icosahedral capsid of pseudo T=3 symmetry with capsid proteins VP1 and VP3. Together they form an icosahedral capsid composed of 60 copies of each VP0, VP1, and VP3. All the three latter proteins contain a beta-sheet structure called beta-barrel jelly roll. In terms of biological role, forms an icosahedral capsid of pseudo T=3 symmetry with capsid proteins VP0 and VP1. Together they form an icosahedral capsid composed of 60 copies of each VP0, VP1, and VP3. All the three latter proteins contain a beta-sheet structure called beta-barrel jelly roll. Required for viral RNA replication. Does not have any proteolytic activity. Functionally, affects membrane integrity and causes an increase in membrane permeability. Its function is as follows. Induces and associates with structural rearrangements of intracellular membranes. Displays RNA-binding, nucleotide binding and NTPase activities. May play a role in virion morphogenesis and viral RNA encapsidation by interacting with the capsid protein VP3. In terms of biological role, serves as membrane anchor via its hydrophobic domain. Plays an essential role in viral RNA replication by recruiting PI4KB at the viral replication sites, thereby allowing the formation of rearranged membranous structures where viral replication takes place. Forms a primer, VPg-pU, which is utilized by the polymerase for the initiation of RNA chains. Functionally, cysteine protease that generates mature viral proteins from the precursor polyprotein. In addition to its proteolytic activity, it binds to viral RNA, and thus influences viral genome replication. RNA and substrate cooperatively bind to the protease. Its function is as follows. Replicates the genomic and antigenomic RNAs by recognizing replications specific signals. Performs VPg uridylylation. This Homo sapiens (Human) protein is Genome polyprotein.